Consider the following 82-residue polypeptide: uncharacterized protein (82 aa).

3 helical membrane-spanning segments follow: residues 4–26, 31–48, and 52–74; these read LDIAFFILPLGIMLLSIVGTCIC, LMPMLSLVISLVLTFTIF, and FLGWAVVYSLVSLALSYITLIVV.

The protein resides in the cell membrane. This is an uncharacterized protein from Bacillus subtilis (strain 168).